The chain runs to 469 residues: tRNA-2-methylthio-N(6)-dimethylallyladenosine synthase (469 aa).

The 121-residue stretch at 22–142 folds into the MTTase N-terminal domain; the sequence is RKVFIKTYGC…LPEALRRAQQ (121 aa). Residues Cys31, Cys67, Cys105, Cys183, Cys187, and Cys190 each coordinate [4Fe-4S] cluster. Residues 169 to 401 enclose the Radical SAM core domain; the sequence is RARGVTAFLT…QALLLKQQQE (233 aa). In terms of domain architecture, TRAM spans 404–466; that stretch reads ESCIGKEIDL…TNSLFAERAE (63 aa).

It belongs to the methylthiotransferase family. MiaB subfamily. As to quaternary structure, monomer. It depends on [4Fe-4S] cluster as a cofactor.

The protein localises to the cytoplasm. It carries out the reaction N(6)-dimethylallyladenosine(37) in tRNA + (sulfur carrier)-SH + AH2 + 2 S-adenosyl-L-methionine = 2-methylsulfanyl-N(6)-dimethylallyladenosine(37) in tRNA + (sulfur carrier)-H + 5'-deoxyadenosine + L-methionine + A + S-adenosyl-L-homocysteine + 2 H(+). Functionally, catalyzes the methylthiolation of N6-(dimethylallyl)adenosine (i(6)A), leading to the formation of 2-methylthio-N6-(dimethylallyl)adenosine (ms(2)i(6)A) at position 37 in tRNAs that read codons beginning with uridine. The polypeptide is tRNA-2-methylthio-N(6)-dimethylallyladenosine synthase (Rhizobium etli (strain CIAT 652)).